A 444-amino-acid polypeptide reads, in one-letter code: Phosphoglucosamine mutase (444 aa).

Catalysis depends on Ser102, which acts as the Phosphoserine intermediate. Residues Ser102, Asp241, Asp243, and Asp245 each coordinate Mg(2+). Phosphoserine is present on Ser102.

It belongs to the phosphohexose mutase family. The cofactor is Mg(2+). In terms of processing, activated by phosphorylation.

It catalyses the reaction alpha-D-glucosamine 1-phosphate = D-glucosamine 6-phosphate. Catalyzes the conversion of glucosamine-6-phosphate to glucosamine-1-phosphate. The protein is Phosphoglucosamine mutase of Glaesserella parasuis serovar 5 (strain SH0165) (Haemophilus parasuis).